Reading from the N-terminus, the 135-residue chain is Small ribosomal subunit protein uS9 (135 aa).

Residues 102-115 (PLKTEGHLSRDPRA) show a composition bias toward basic and acidic residues. The interval 102–135 (PLKTEGHLSRDPRAKERRKYGLKKARKAPQFSKR) is disordered. Residues 116–135 (KERRKYGLKKARKAPQFSKR) show a composition bias toward basic residues.

This sequence belongs to the universal ribosomal protein uS9 family.

The chain is Small ribosomal subunit protein uS9 from Synechococcus sp. (strain CC9311).